Here is a 184-residue protein sequence, read N- to C-terminus: ATP synthase subunit b, chloroplastic (184 aa).

The chain crosses the membrane as a helical span at residues 27-49 (LATNLINLSVVLGVLIFFGKGVL).

Belongs to the ATPase B chain family. As to quaternary structure, F-type ATPases have 2 components, F(1) - the catalytic core - and F(0) - the membrane proton channel. F(1) has five subunits: alpha(3), beta(3), gamma(1), delta(1), epsilon(1). F(0) has four main subunits: a(1), b(1), b'(1) and c(10-14). The alpha and beta chains form an alternating ring which encloses part of the gamma chain. F(1) is attached to F(0) by a central stalk formed by the gamma and epsilon chains, while a peripheral stalk is formed by the delta, b and b' chains.

Its subcellular location is the plastid. It localises to the chloroplast thylakoid membrane. Functionally, f(1)F(0) ATP synthase produces ATP from ADP in the presence of a proton or sodium gradient. F-type ATPases consist of two structural domains, F(1) containing the extramembraneous catalytic core and F(0) containing the membrane proton channel, linked together by a central stalk and a peripheral stalk. During catalysis, ATP synthesis in the catalytic domain of F(1) is coupled via a rotary mechanism of the central stalk subunits to proton translocation. Component of the F(0) channel, it forms part of the peripheral stalk, linking F(1) to F(0). The chain is ATP synthase subunit b, chloroplastic from Helianthus annuus (Common sunflower).